Reading from the N-terminus, the 92-residue chain is MWPVLWTVVRTYAPYVTFPVAFVVGAVGYHLEWFIRGKDPQPAEEEKSISERREDRKLDELLGKDHTQVVSLKDKLEFAPKAVLNRNRPEKN.

Residues Y15–F34 form a helical membrane-spanning segment.

This sequence belongs to the SMIM12 family.

The protein resides in the membrane. This chain is Small integral membrane protein 12 (SMIM12), found in Canis lupus familiaris (Dog).